A 477-amino-acid polypeptide reads, in one-letter code: Exodeoxyribonuclease 7 large subunit (477 aa).

The disordered stretch occupies residues 456 to 477 (GGTVAPRKAPPKKPGGGQGSLL).

Belongs to the XseA family. In terms of assembly, heterooligomer composed of large and small subunits.

It localises to the cytoplasm. It carries out the reaction Exonucleolytic cleavage in either 5'- to 3'- or 3'- to 5'-direction to yield nucleoside 5'-phosphates.. Its function is as follows. Bidirectionally degrades single-stranded DNA into large acid-insoluble oligonucleotides, which are then degraded further into small acid-soluble oligonucleotides. In Parvibaculum lavamentivorans (strain DS-1 / DSM 13023 / NCIMB 13966), this protein is Exodeoxyribonuclease 7 large subunit.